Here is a 121-residue protein sequence, read N- to C-terminus: Small ribosomal subunit protein uS13 (121 aa).

A disordered region spans residues 97 to 121; the sequence is VRGQRTRTNARTRRGARKTVAGRKK. Over residues 100-121 the composition is skewed to basic residues; that stretch reads QRTRTNARTRRGARKTVAGRKK.

The protein belongs to the universal ribosomal protein uS13 family. In terms of assembly, part of the 30S ribosomal subunit. Forms a loose heterodimer with protein S19. Forms two bridges to the 50S subunit in the 70S ribosome.

Its function is as follows. Located at the top of the head of the 30S subunit, it contacts several helices of the 16S rRNA. In the 70S ribosome it contacts the 23S rRNA (bridge B1a) and protein L5 of the 50S subunit (bridge B1b), connecting the 2 subunits; these bridges are implicated in subunit movement. Contacts the tRNAs in the A and P-sites. The sequence is that of Small ribosomal subunit protein uS13 from Prochlorococcus marinus (strain NATL2A).